The chain runs to 302 residues: Putative S-adenosyl-L-methionine-dependent methyltransferase MRA_0290 (302 aa).

S-adenosyl-L-methionine contacts are provided by residues Asp126 and 155–156; that span reads DL.

The protein belongs to the UPF0677 family.

Its function is as follows. Exhibits S-adenosyl-L-methionine-dependent methyltransferase activity. The sequence is that of Putative S-adenosyl-L-methionine-dependent methyltransferase MRA_0290 from Mycobacterium tuberculosis (strain ATCC 25177 / H37Ra).